A 287-amino-acid chain; its full sequence is Probable endonuclease 4 (287 aa).

Zn(2+) contacts are provided by His-69, His-109, Glu-146, Asp-180, His-183, His-217, Asp-230, His-232, and Glu-262.

This sequence belongs to the AP endonuclease 2 family. It depends on Zn(2+) as a cofactor.

The catalysed reaction is Endonucleolytic cleavage to 5'-phosphooligonucleotide end-products.. Functionally, endonuclease IV plays a role in DNA repair. It cleaves phosphodiester bonds at apurinic or apyrimidinic (AP) sites, generating a 3'-hydroxyl group and a 5'-terminal sugar phosphate. The polypeptide is Probable endonuclease 4 (Petrotoga mobilis (strain DSM 10674 / SJ95)).